The primary structure comprises 299 residues: SET domain-containing protein 9 (299 aa).

In terms of domain architecture, SET spans 122–295 (FSVAQATSSL…QGEELFSNYY (174 aa)). S-adenosyl-L-methionine is bound at residue Tyr294.

The protein belongs to the class V-like SAM-binding methyltransferase superfamily.

In Homo sapiens (Human), this protein is SET domain-containing protein 9 (SETD9).